Here is a 119-residue protein sequence, read N- to C-terminus: Large ribosomal subunit protein uL18 (119 aa).

Residues 1–25 are disordered; sequence MITKIDKNKVRKKRHARVRSKISGT. Positions 9–20 are enriched in basic residues; the sequence is KVRKKRHARVRS.

This sequence belongs to the universal ribosomal protein uL18 family. Part of the 50S ribosomal subunit; part of the 5S rRNA/L5/L18/L25 subcomplex. Contacts the 5S and 23S rRNAs.

Its function is as follows. This is one of the proteins that bind and probably mediate the attachment of the 5S RNA into the large ribosomal subunit, where it forms part of the central protuberance. In Listeria innocua serovar 6a (strain ATCC BAA-680 / CLIP 11262), this protein is Large ribosomal subunit protein uL18.